A 492-amino-acid polypeptide reads, in one-letter code: MNRIRIHVLPTNRGRITPVPRSQEPLSCAFTHRPCSQPRLEGQEFCIKHILEDKDAPFKQCSYISTKNGKRCPNAAPKPEKKDGVSFCAEHVRRNALALHAQMKKTNPGPMGETLLCQLSSYAKTELGSQTPESSRSEASRILDEDSWSDGEQEPITVDQTWRGDPDSEADSIDSDQEDPLKHAGVYTAEEVALIMREKLIRLQSLYIDQFKRLQHLLKEKKRRYLHNRKVEHEALGSSLLTGPEGLLAKERENLKRLKCLRRYRQRYGVEALLHRQLKERRMLATDGAAQQAHTTRSSQRCLAFVDDVRCSNQSLPMTRHCLTHICQDTNQVLFKCCQGSEEVPCNKPVPVSLSEDPCCPLHFQLPPQMYKPEQVLSVPDDLEAGPMDLYLSAAELQPTESLPLEFSDDLDVVGDGMQCPPSPLLFDPSLTLEDHLVKEIAEDPVDILGQMQMAGDGCRSQGSRNSEKGSAPLSQSGLATANGKPEPTSIS.

Residue Lys-78 forms a Glycyl lysine isopeptide (Lys-Gly) (interchain with G-Cter in SUMO2) linkage. The tract at residues 127-182 (LGSQTPESSRSEASRILDEDSWSDGEQEPITVDQTWRGDPDSEADSIDSDQEDPLK) is disordered. Thr-131 carries the post-translational modification Phosphothreonine. Positions 135 to 144 (SRSEASRILD) are enriched in basic and acidic residues. Residues Ser-147, Ser-149, Ser-168, Ser-172, and Ser-175 each carry the phosphoserine modification. Positions 167–178 (DSEADSIDSDQE) are enriched in acidic residues. The tract at residues 308 to 364 (DVRCSNQSLPMTRHCLTHICQDTNQVLFKCCQGSEEVPCNKPVPVSLSEDPCCPLHF) is required for interaction with other NSL complex members. Residues 455–492 (AGDGCRSQGSRNSEKGSAPLSQSGLATANGKPEPTSIS) form a disordered region.

As to quaternary structure, component of the NSL complex at least composed of KAT8/MOF, KANSL1, KANSL2, KANSL3, MCRS1, PHF20, OGT1/OGT, WDR5 and HCFC1.

The protein localises to the nucleus. It is found in the mitochondrion. Non-catalytic component of the NSL histone acetyltransferase complex, a multiprotein complex that mediates histone H4 acetylation at 'Lys-5'- and 'Lys-8' (H4K5ac and H4K8ac) at transcription start sites and promotes transcription initiation. Required for NSL complex stability and for transcription of intraciliary transport genes in both ciliated and non-ciliated cells by regulating histone H4 acetylation at 'Lys-5'- and 'Lys-12' (H4K5ac and H4K12ac). This is necessary for cilium assembly in ciliated cells and for organization of the microtubule cytoskeleton in non-ciliated cells. Required within the NSL complex to maintain nuclear architecture stability by promoting KAT8-mediated acetylation of lamin LMNA. This Pongo abelii (Sumatran orangutan) protein is KAT8 regulatory NSL complex subunit 2 (KANSL2).